A 451-amino-acid chain; its full sequence is Serine--tRNA ligase, cytoplasmic (451 aa).

236–238 (TSE) is an L-serine binding site. Residues 267–269 (RKE) and Val283 contribute to the ATP site. Glu290 is an L-serine binding site. 354–357 (ELVS) lines the ATP pocket. An L-serine-binding site is contributed by Thr392.

Belongs to the class-II aminoacyl-tRNA synthetase family. Type-1 seryl-tRNA synthetase subfamily. Homodimer. The tRNA molecule binds across the dimer.

The protein localises to the cytoplasm. The catalysed reaction is tRNA(Ser) + L-serine + ATP = L-seryl-tRNA(Ser) + AMP + diphosphate + H(+). It carries out the reaction tRNA(Sec) + L-serine + ATP = L-seryl-tRNA(Sec) + AMP + diphosphate + H(+). Its pathway is aminoacyl-tRNA biosynthesis; selenocysteinyl-tRNA(Sec) biosynthesis; L-seryl-tRNA(Sec) from L-serine and tRNA(Sec): step 1/1. Functionally, catalyzes the attachment of serine to tRNA(Ser). Is also able to aminoacylate tRNA(Sec) with serine, to form the misacylated tRNA L-seryl-tRNA(Sec), which will be further converted into selenocysteinyl-tRNA(Sec). This Dictyostelium discoideum (Social amoeba) protein is Serine--tRNA ligase, cytoplasmic (serS).